Reading from the N-terminus, the 802-residue chain is Copper-exporting P-type ATPase (802 aa).

HMA domains lie at 5–70 (KKTT…YGVA) and 72–138 (ETVE…YDAS). Residues cysteine 16, cysteine 19, cysteine 83, and cysteine 86 each coordinate Cu(+). 6 helical membrane passes run 161 to 181 (LIIS…HLFN), 192 to 212 (WFQF…FYVG), 224 to 244 (MDVL…YEMV), 256 to 276 (LYFE…YLEA), 411 to 431 (YFVP…ITLV), and 438 to 458 (PALV…LGLA). Catalysis depends on aspartate 495, which acts as the 4-aspartylphosphate intermediate. Residues aspartate 690 and aspartate 694 each coordinate Mg(2+). 2 helical membrane-spanning segments follow: residues 748–767 (LFWA…LGLL) and 771–790 (VAGA…ALRL).

This sequence belongs to the cation transport ATPase (P-type) (TC 3.A.3) family. Type IB subfamily.

It is found in the cell membrane. The enzyme catalyses Cu(+)(in) + ATP + H2O = Cu(+)(out) + ADP + phosphate + H(+). Involved in copper export. In Staphylococcus aureus (strain MRSA252), this protein is Copper-exporting P-type ATPase (copA).